The following is a 221-amino-acid chain: uncharacterized protein (221 aa).

This is an uncharacterized protein from Treponema pallidum (strain Nichols).